Consider the following 291-residue polypeptide: Undecaprenyl-diphosphatase (291 aa).

The next 8 helical transmembrane spans lie at 1-21 (MFIIELIKGIILGVVEGLTEF), 48-68 (SAFTFKIVIQLGSVFAAAWVF), 102-122 (LHVLVGMVPAGILGLLFDDFI), 126-146 (LFSVPTVMIGLFVGAIYMIIA), 162-182 (INYFQAFVIGISQAVAMWPGF), 203-223 (SDFTFIMAVPIMLAASGLSLL), 236-256 (FYILGFLAAFTVGLIAIKTFL), and 267-287 (FAIYRIVLVIFIAILYFGFGI).

The protein belongs to the UppP family.

The protein resides in the cell membrane. It carries out the reaction di-trans,octa-cis-undecaprenyl diphosphate + H2O = di-trans,octa-cis-undecaprenyl phosphate + phosphate + H(+). Catalyzes the dephosphorylation of undecaprenyl diphosphate (UPP). Confers resistance to bacitracin. The sequence is that of Undecaprenyl-diphosphatase from Staphylococcus aureus (strain MSSA476).